The primary structure comprises 780 residues: Neutral ceramidase (780 aa).

Residues 1-12 are Cytoplasmic-facing; that stretch reads MAKRTFSNLETF. Residues 13 to 33 form a helical; Signal-anchor for type II membrane protein membrane-spanning segment; sequence LIFLLVMMSAITVALLSLLFI. The Lumenal portion of the chain corresponds to 34–780; sequence TSGTIENHKD…TSPAFEVVTI (747 aa). Residues 47 to 90 form a disordered region; the sequence is HFFSTTQSPPATQGSTAAQRSTATQHSTATQSSTATQTSPVPLT. Low complexity predominate over residues 57-85; sequence ATQGSTAAQRSTATQHSTATQSSTATQTS. O-linked (GalNAc...) threonine glycosylation occurs at threonine 62. Serine 67 carries O-linked (GalNAc...) serine glycosylation. O-linked (GalNAc...) threonine glycans are attached at residues threonine 68 and threonine 70. Serine 73 carries an O-linked (GalNAc...) serine glycan. O-linked (GalNAc...) threonine glycans are attached at residues threonine 74 and threonine 76. Serine 78 and serine 79 each carry an O-linked (GalNAc...) serine glycan. O-linked (GalNAc...) threonine glycosylation is found at threonine 80, threonine 82, and threonine 84. An N-linked (GlcNAc...) asparagine glycan is attached at asparagine 98. A Ca(2+)-binding site is contributed by leucine 134. Asparagine 151 carries an N-linked (GlcNAc...) asparagine glycan. Zn(2+) is bound at residue histidine 194. Asparagine 217 carries an N-linked (GlcNAc...) asparagine glycan. Histidine 303 contributes to the Zn(2+) binding site. Residue asparagine 308 is glycosylated (N-linked (GlcNAc...) asparagine). The Nucleophile role is filled by serine 354. 2 cysteine pairs are disulfide-bonded: cysteine 362–cysteine 376 and cysteine 369–cysteine 384. N-linked (GlcNAc...) asparagine glycosylation is found at asparagine 440 and asparagine 468. Cysteine 448 and cysteine 498 are disulfide-bonded. Glutamate 540 contributes to the Zn(2+) binding site. Residue asparagine 564 is glycosylated (N-linked (GlcNAc...) asparagine). Tyrosine 579 is a binding site for Zn(2+). Ca(2+) is bound by residues aspartate 712, serine 714, and threonine 717. N-linked (GlcNAc...) asparagine glycosylation occurs at asparagine 730. Residues 770-780 are required for correct folding and localization; sequence GTSPAFEVVTI. Residue threonine 779 is glycosylated (O-linked (GalNAc...) threonine).

It belongs to the neutral ceramidase family. It depends on Zn(2+) as a cofactor. Proteolytic cleavage of the N-terminus removes the signal-anchor and produces a soluble form of the protein. Post-translationally, N-glycosylated. Required for enzyme activity. In terms of processing, O-glycosylated. Required to retain it as a type II membrane protein at the cell surface. Phosphorylated. May prevent ubiquitination and subsequent degradation. Post-translationally, ubiquitinated, leading to its degradation by the proteasome. Ubiquitination is triggered by nitric oxide. Primarily expressed in intestine. Ubiquitously expressed with higher levels in kidney, skeletal muscle and heart. The ubiquitous expression observed for ASAH2 might be an experimental artifact due to the paralog ASAH2B.

It localises to the cell membrane. Its subcellular location is the membrane raft. The protein localises to the membrane. The protein resides in the caveola. It is found in the golgi apparatus membrane. It localises to the mitochondrion. Its subcellular location is the secreted. The protein localises to the extracellular exosome. The enzyme catalyses an N-acylsphing-4-enine + H2O = sphing-4-enine + a fatty acid. The catalysed reaction is N-dodecanoylsphing-4-enine + H2O = dodecanoate + sphing-4-enine. It catalyses the reaction N-hexadecanoylsphing-4-enine + H2O = sphing-4-enine + hexadecanoate. It carries out the reaction N-octanoylsphing-4-enine + H2O = octanoate + sphing-4-enine. The enzyme catalyses N-(hexanoyl)sphing-4-enine + H2O = hexanoate + sphing-4-enine. The catalysed reaction is N-octadecanoylsphing-4-enine + H2O = sphing-4-enine + octadecanoate. It catalyses the reaction N-tetradecanoylsphing-4-enine + H2O = tetradecanoate + sphing-4-enine. It carries out the reaction N-(9Z-octadecenoyl)-sphing-4-enine + H2O = sphing-4-enine + (9Z)-octadecenoate. The enzyme catalyses N-(15Z-tetracosenoyl)-sphing-4-enine + H2O = (15Z)-tetracosenoate + sphing-4-enine. The catalysed reaction is sphinganine + hexadecanoate = N-hexadecanoylsphinganine + H2O. It catalyses the reaction N-(octadecanoyl)-sphinganine + H2O = sphinganine + octadecanoate. It participates in lipid metabolism; sphingolipid metabolism. With respect to regulation, inhibited by dithiothreitol (DTT) and 2-mercaptoethanol. Activity is mildly stimulated by Ca(2+) and Mg(2+), but is not inhibited by EDTA. Activity is inhibited by millimolar levels of Fe(2+), Zn(2+) and Cu(2+). Inhibited by cholesterol. Functionally, plasma membrane ceramidase that hydrolyzes sphingolipid ceramides into sphingosine and free fatty acids at neutral pH. Ceramides, sphingosine, and its phosphorylated form sphingosine-1-phosphate are bioactive lipids that mediate cellular signaling pathways regulating several biological processes including cell proliferation, apoptosis and differentiation. Also catalyzes the reverse reaction allowing the synthesis of ceramides from fatty acids and sphingosine. Together with sphingomyelinase, participates in the production of sphingosine and sphingosine-1-phosphate from the degradation of sphingomyelin, a sphingolipid enriched in the plasma membrane of cells. Also participates in the hydrolysis of ceramides from the extracellular milieu allowing the production of sphingosine-1-phosphate inside and outside cells. This is the case for instance with the digestion of dietary sphingolipids in the intestinal tract. The chain is Neutral ceramidase (ASAH2) from Homo sapiens (Human).